The following is a 295-amino-acid chain: G1/S-specific cyclin-D1 (295 aa).

The Cyclin N-terminal domain maps to 28-152 (LRAMLKAEET…LLVNKLKWNL (125 aa)). The disordered stretch occupies residues 264 to 295 (QQSLDPKAAEEEEEEEEADLACTPTDVRDVNI). Residue K270 forms a Glycyl lysine isopeptide (Lys-Gly) (interchain with G-Cter in ubiquitin) linkage. Positions 273 to 282 (EEEEEEEEAD) are enriched in acidic residues. Position 286 is a phosphothreonine (T286).

Belongs to the cyclin family. Cyclin D subfamily. As to quaternary structure, interacts with either CDK4 or CDK6 protein kinase to form a serine/threonine kinase holoenzyme complex. The cyclin subunit imparts substrate specificity to the complex. Component of the ternary complex CCND1/CDK4/CDKN1B required for nuclear translocation and modulation of CDK4-mediated kinase activity. Interacts directly with CDKN1B. Can form similar complexes with either CDKN1A or CDKN2A. Interacts with UHRF2; the interaction ubiquitinates CCND1 and appears to occur independently of phosphorylation. Interacts with USP2. Interacts (via cyclin N-terminal domain) with INSM1 (via N-terminal region); the interaction competes with the binding of CCND1 to CDK4 during cell cycle progression and inhibits CDK4 activity. Interacts with CDK4; the interaction is prevented with the binding of CCND1 to INSM1 during cell cycle progression. Post-translationally, phosphorylation at Thr-286 by MAP kinases is required for ubiquitination and degradation by the DCX(AMBRA1) complex. It also plays an essential role for recognition by the FBXO31 component of SCF (SKP1-cullin-F-box) protein ligase complex following DNA damage. Ubiquitinated at Lys-270 by the DCX(AMBRA1) complex during the transition from G1 to S cell phase, leading to its degradation: ubiquitination is dependent on Thr-286 phosphorylation. The DCX(AMBRA1) complex represents the major regulator of CCND1 stability during the G1/S transition. Also ubiquitinated by the SCF(FBXO4) and Cul7-RING(FBXW8) ubiquitin-protein ligase complexes. Following DNA damage it is ubiquitinated by the SCF(FBXO31) protein ligase complex. SCF(FBXO31) ubiquitination is dependent on Thr-286 phosphorylation. Ubiquitinated also by UHRF2 apparently in a phosphorylation-independent manner. Ubiquitination leads to its degradation and G1 arrest. Deubiquitinated by USP2; leading to its stabilization.

It is found in the nucleus. The protein localises to the cytoplasm. It localises to the nucleus membrane. In terms of biological role, regulatory component of the cyclin D1-CDK4 (DC) complex that phosphorylates and inhibits members of the retinoblastoma (RB) protein family including RB1 and regulates the cell-cycle during G(1)/S transition. Phosphorylation of RB1 allows dissociation of the transcription factor E2F from the RB/E2F complex and the subsequent transcription of E2F target genes which are responsible for the progression through the G(1) phase. Hypophosphorylates RB1 in early G(1) phase. Cyclin D-CDK4 complexes are major integrators of various mitogenenic and antimitogenic signals. Also a substrate for SMAD3, phosphorylating SMAD3 in a cell-cycle-dependent manner and repressing its transcriptional activity. Component of the ternary complex, cyclin D1/CDK4/CDKN1B, required for nuclear translocation and activity of the cyclin D-CDK4 complex. Exhibits transcriptional corepressor activity with INSM1 on the NEUROD1 and INS promoters in a cell cycle-independent manner. This is G1/S-specific cyclin-D1 (CCND1) from Canis lupus familiaris (Dog).